We begin with the raw amino-acid sequence, 92 residues long: uncharacterized protein (92 aa).

A run of 3 helical transmembrane segments spans residues 1-21, 30-50, and 62-82; these read MNIY…LVGL, ANVL…IVVI, and IALA…KVIG.

It to M.thermoautotrophicum MTH1250.

It localises to the cell membrane. This is an uncharacterized protein from Methanocaldococcus jannaschii (strain ATCC 43067 / DSM 2661 / JAL-1 / JCM 10045 / NBRC 100440) (Methanococcus jannaschii).